The primary structure comprises 497 residues: Cysteine-rich secretory protein LCCL domain-containing 2 (497 aa).

A signal peptide spans 1–22 (MSCVLGGVIPLGLLFLVCGSQG). N-linked (GlcNAc...) asparagine glycosylation occurs at Asn27. Residues 62-200 (LHNKLRGQVQ…ENAVYFVCNY (139 aa)) enclose the SCP domain. LCCL domains lie at 284 to 379 (MTQV…SSSF) and 385 to 488 (KVQD…RDGK). Intrachain disulfides connect Cys290/Cys308, Cys312/Cys332, Cys391/Cys413, and Cys417/Cys440.

The protein belongs to the CRISP family. As to quaternary structure, binds to heparin, dermatan sulfate and chondroitin sulfate.

It localises to the secreted. Its function is as follows. Promotes matrix assembly. The polypeptide is Cysteine-rich secretory protein LCCL domain-containing 2 (CRISPLD2) (Homo sapiens (Human)).